The primary structure comprises 70 residues: Putative membrane protein insertion efficiency factor (70 aa).

This sequence belongs to the UPF0161 family.

The protein resides in the cell membrane. Functionally, could be involved in insertion of integral membrane proteins into the membrane. The sequence is that of Putative membrane protein insertion efficiency factor from Finegoldia magna (strain ATCC 29328 / DSM 20472 / WAL 2508) (Peptostreptococcus magnus).